The primary structure comprises 897 residues: Translation initiation factor IF-2 (897 aa).

Positions 52-310 are disordered; sequence EHGSAPDKLT…LLQQGFQKPA (259 aa). Residues 68–82 are compositionally biased toward polar residues; the sequence is STLNVPGTGGKSKSV. 2 stretches are compositionally biased toward basic and acidic residues: residues 85–159 and 166–217; these read EVRK…KDKV and EMTK…ENEK. Over residues 256–272 the composition is skewed to basic residues; sequence GRTRTASKTARPQKKGN. The span at 273 to 286 shows a compositional bias: basic and acidic residues; the sequence is KHAESKADREEARA. The 170-residue stretch at 396–565 folds into the tr-type G domain; sequence PRAPVVTIMG…LLQAEVLELK (170 aa). The interval 405–412 is G1; the sequence is GHVDHGKT. 405–412 is a GTP binding site; sequence GHVDHGKT. Residues 430–434 form a G2 region; the sequence is GITQH. Residues 451 to 454 form a G3 region; that stretch reads DTPG. Residues 451 to 455 and 505 to 508 contribute to the GTP site; these read DTPGH and NKID. The tract at residues 505–508 is G4; that stretch reads NKID. The segment at 541–543 is G5; that stretch reads SAK.

It belongs to the TRAFAC class translation factor GTPase superfamily. Classic translation factor GTPase family. IF-2 subfamily.

It is found in the cytoplasm. One of the essential components for the initiation of protein synthesis. Protects formylmethionyl-tRNA from spontaneous hydrolysis and promotes its binding to the 30S ribosomal subunits. Also involved in the hydrolysis of GTP during the formation of the 70S ribosomal complex. The chain is Translation initiation factor IF-2 (infB) from Enterobacter cloacae.